The sequence spans 433 residues: Alpha-(1,3)-fucosyltransferase 4 (433 aa).

A disordered region spans residues 1 to 20; the sequence is MAPAGRKLQHESRCRPSRPV. The Cytoplasmic segment spans residues 1–54; the sequence is MAPAGRKLQHESRCRPSRPVDAWRAAATTRGRCMGTPGARRTARRGGWGLPRTS. Residues 55-74 traverse the membrane as a helical; Signal-anchor for type II membrane protein segment; sequence SGLAAAGLLCTALTACLCWG. The Lumenal segment spans residues 75–433; the sequence is QLPPLPWASP…IHNLADWFQR (359 aa). Residues N117 and N218 are each glycosylated (N-linked (GlcNAc...) asparagine).

The protein belongs to the glycosyltransferase 10 family. In terms of tissue distribution, in adult, highest expression in spleen, testis, brain, lung, kidney and skeletal muscle and to a lesser extent in liver and heart.

The protein resides in the golgi apparatus. It localises to the golgi stack membrane. The enzyme catalyses a beta-D-galactosyl-(1-&gt;4)-N-acetyl-beta-D-glucosaminyl derivative + GDP-beta-L-fucose = a beta-D-galactosyl-(1-&gt;4)-[alpha-L-fucosyl-(1-&gt;3)]-N-acetyl-beta-D-glucosaminyl derivative + GDP + H(+). The catalysed reaction is an N-acetyl-alpha-neuraminyl-(2-&gt;3)-beta-D-galactosyl-(1-&gt;4)-N-acetyl-beta-D-glucosaminyl derivative + GDP-beta-L-fucose = an alpha-Neu5Ac-(2-&gt;3)-beta-D-Gal-(1-&gt;4)-[alpha-L-Fuc-(1-&gt;3)]-beta-D-GlcNAc derivative + GDP + H(+). It catalyses the reaction an alpha-Neu5Ac-(2-&gt;3)-beta-D-Gal-(1-&gt;4)-beta-D-GlcNAc-(1-&gt;3)-beta-D-Gal-(1-&gt;4)-beta-D-GlcNAc derivative + GDP-beta-L-fucose = an alpha-Neu5Ac-(2-&gt;3)-beta-D-Gal-(1-&gt;4)-beta-D-GlcNAc-(1-&gt;3)-beta-D-Gal-(1-&gt;4)-[alpha-L-Fuc-(1-&gt;3)]-beta-D-GlcNAc derivative + GDP + H(+). It carries out the reaction an alpha-Neu5Ac-(2-&gt;3)-beta-D-Gal-(1-&gt;4)-beta-D-GlcNAc6S derivative + GDP-beta-L-fucose = an alpha-Neu5Ac-(2-&gt;3)-beta-D-Gal-(1-&gt;4)-[alpha-L-Fuc-(1-&gt;3)]-beta-D-GlcNAc6S derivative + GDP + H(+). The protein operates within protein modification; protein glycosylation. Its function is as follows. Catalyzes alpha(1-&gt;3) linkage of fucosyl moiety transferred from GDP-beta-L-fucose to N-acetyl glucosamine (GlcNAc) within type 2 lactosamine (LacNAc, Gal-beta(1-&gt;4)GlcNAc) glycan attached to N- or O-linked glycoproteins. Robustly fucosylates nonsialylated distal LacNAc unit of the polylactosamine chain to form Lewis X antigen (CD15), a glycan determinant known to mediate important cellular functions in development and immunity. Fucosylates with lower efficiency sialylated LacNAc acceptors to form sialyl Lewis X and 6-sulfo sialyl Lewis X determinants that serve as recognition epitopes for C-type lectins. Together with FUT7 contributes to SELE, SELL and SELP selectin ligand biosynthesis and selectin-dependent lymphocyte homing, leukocyte migration and blood leukocyte homeostasis. In a cell type specific manner, may also fucosylate the internal LacNAc unit of the polylactosamine chain to form VIM-2 antigen that serves as recognition epitope for SELE. This is Alpha-(1,3)-fucosyltransferase 4 (Fut4) from Rattus norvegicus (Rat).